A 414-amino-acid chain; its full sequence is Dihydroorotase (414 aa).

Zn(2+) is bound by residues His57 and His59. Substrate-binding positions include 59 to 61 (HLR) and Asn91. Zn(2+) is bound by residues Lys135, His164, His204, and Asp272. Residue Lys135 is modified to N6-carboxylysine. Residue Asp272 is part of the active site. Substrate-binding positions include His276 and 286 to 287 (AG).

This sequence belongs to the metallo-dependent hydrolases superfamily. DHOase family. Class I DHOase subfamily. Requires Zn(2+) as cofactor.

The enzyme catalyses (S)-dihydroorotate + H2O = N-carbamoyl-L-aspartate + H(+). It functions in the pathway pyrimidine metabolism; UMP biosynthesis via de novo pathway; (S)-dihydroorotate from bicarbonate: step 3/3. Catalyzes the reversible cyclization of carbamoyl aspartate to dihydroorotate. This is Dihydroorotase from Pyrococcus furiosus (strain ATCC 43587 / DSM 3638 / JCM 8422 / Vc1).